The following is a 295-amino-acid chain: Cytidine deaminase (295 aa).

2 CMP/dCMP-type deaminase domains span residues 48-168 (SDKE…FGPA) and 187-295 (DDKD…FVNV). Residue 89–91 (NME) participates in substrate binding. His-102 contributes to the Zn(2+) binding site. Glu-104 acts as the Proton donor in catalysis. Residues Cys-129 and Cys-132 each coordinate Zn(2+).

Belongs to the cytidine and deoxycytidylate deaminase family. Homodimer. Requires Zn(2+) as cofactor.

It carries out the reaction cytidine + H2O + H(+) = uridine + NH4(+). The enzyme catalyses 2'-deoxycytidine + H2O + H(+) = 2'-deoxyuridine + NH4(+). Its function is as follows. This enzyme scavenges exogenous and endogenous cytidine and 2'-deoxycytidine for UMP synthesis. The polypeptide is Cytidine deaminase (Vibrio parahaemolyticus serotype O3:K6 (strain RIMD 2210633)).